The following is an 88-amino-acid chain: uncharacterized protein (88 aa).

This is an uncharacterized protein from Sinorhizobium fredii (strain NBRC 101917 / NGR234).